Consider the following 344-residue polypeptide: Sulfate/thiosulfate import ATP-binding protein CysA (344 aa).

Residues 9–239 (IQVSQVSKQF…PATPFVMSFI (231 aa)) enclose the ABC transporter domain. Residue 41–48 (GPSGSGKS) coordinates ATP.

It belongs to the ABC transporter superfamily. Sulfate/tungstate importer (TC 3.A.1.6) family. In terms of assembly, the complex is composed of two ATP-binding proteins (CysA), two transmembrane proteins (CysT and CysW) and a solute-binding protein (CysP).

It localises to the cell inner membrane. The catalysed reaction is sulfate(out) + ATP + H2O = sulfate(in) + ADP + phosphate + H(+). It catalyses the reaction thiosulfate(out) + ATP + H2O = thiosulfate(in) + ADP + phosphate + H(+). Its function is as follows. Part of the ABC transporter complex CysAWTP involved in sulfate/thiosulfate import. Responsible for energy coupling to the transport system. The chain is Sulfate/thiosulfate import ATP-binding protein CysA from Synechococcus elongatus (strain ATCC 33912 / PCC 7942 / FACHB-805) (Anacystis nidulans R2).